Reading from the N-terminus, the 77-residue chain is SS18-like protein 2 (77 aa).

Positions 50 to 53 (YQHV) match the SH2-binding motif.

It belongs to the SS18 family.

The chain is SS18-like protein 2 (Ss18l2) from Mus musculus (Mouse).